Here is a 261-residue protein sequence, read N- to C-terminus: Small ribosomal subunit protein uS2 (261 aa).

A disordered region spans residues 224–261 (GRQGEDDEAVQQEEVAEGVSKDSLEDLKKTVEEGSNEE). Residues 228–239 (EDDEAVQQEEVA) are compositionally biased toward acidic residues. Positions 242 to 255 (VSKDSLEDLKKTVE) are enriched in basic and acidic residues.

Belongs to the universal ribosomal protein uS2 family.

The protein is Small ribosomal subunit protein uS2 (rpsB) of Pediococcus acidilactici.